A 254-amino-acid chain; its full sequence is Small ribosomal subunit protein uS5 (254 aa).

A compositionally biased stretch (polar residues) spans 1 to 10 (MSAPEAQQQK). Positions 1 to 34 (MSAPEAQQQKRGGFGGRNRGRPNRRGPRNTEEKG) are disordered. An N-acetylserine modification is found at S2. R11 bears the Asymmetric dimethylarginine; by HMT1; alternate mark. R11 bears the Omega-N-methylarginine; by HMT1; alternate mark. R17 carries the post-translational modification Omega-N-methylarginine; by HMT1. The span at 18 to 27 (NRGRPNRRGP) shows a compositional bias: basic residues. K33 is covalently cross-linked (Glycyl lysine isopeptide (Lys-Gly) (interchain with G-Cter in ubiquitin)). An S5 DRBM domain is found at 76-139 (LQDEVMNIKP…IIAKLSVIPI (64 aa)).

This sequence belongs to the universal ribosomal protein uS5 family. In terms of assembly, component of the small ribosomal subunit (SSU). Mature yeast ribosomes consist of a small (40S) and a large (60S) subunit. The 40S small subunit contains 1 molecule of ribosomal RNA (18S rRNA) and 33 different proteins (encoded by 57 genes). The large 60S subunit contains 3 rRNA molecules (25S, 5.8S and 5S rRNA) and 46 different proteins (encoded by 81 genes). Interacts with snoRNA U3. Interacts with MPP10. Component of the ribosomal small subunit (SSU) processome composed of at least 40 protein subunits and snoRNA U3. Post-translationally, N-terminally acetylated by acetyltransferase NatA.

The protein localises to the cytoplasm. The protein resides in the nucleus. It localises to the nucleolus. Component of the ribosome, a large ribonucleoprotein complex responsible for the synthesis of proteins in the cell. The small ribosomal subunit (SSU) binds messenger RNAs (mRNAs) and translates the encoded message by selecting cognate aminoacyl-transfer RNA (tRNA) molecules. The large subunit (LSU) contains the ribosomal catalytic site termed the peptidyl transferase center (PTC), which catalyzes the formation of peptide bonds, thereby polymerizing the amino acids delivered by tRNAs into a polypeptide chain. The nascent polypeptides leave the ribosome through a tunnel in the LSU and interact with protein factors that function in enzymatic processing, targeting, and the membrane insertion of nascent chains at the exit of the ribosomal tunnel. uS5 is important for the assembly and function of the 40S ribosomal subunit. Mutations in this protein affects the control of translational fidelity. Involved in nucleolar processing of pre-18S ribosomal RNA and ribosome assembly. This chain is Small ribosomal subunit protein uS5, found in Saccharomyces cerevisiae (strain ATCC 204508 / S288c) (Baker's yeast).